Reading from the N-terminus, the 308-residue chain is tRNA dimethylallyltransferase (308 aa).

9–16 contacts ATP; sequence GPTAVGKT. Substrate is bound at residue 11-16; that stretch reads TAVGKT. The segment at 34–37 is interaction with substrate tRNA; sequence DSMQ.

It belongs to the IPP transferase family. As to quaternary structure, monomer. Mg(2+) serves as cofactor.

It carries out the reaction adenosine(37) in tRNA + dimethylallyl diphosphate = N(6)-dimethylallyladenosine(37) in tRNA + diphosphate. In terms of biological role, catalyzes the transfer of a dimethylallyl group onto the adenine at position 37 in tRNAs that read codons beginning with uridine, leading to the formation of N6-(dimethylallyl)adenosine (i(6)A). This Lactobacillus delbrueckii subsp. bulgaricus (strain ATCC 11842 / DSM 20081 / BCRC 10696 / JCM 1002 / NBRC 13953 / NCIMB 11778 / NCTC 12712 / WDCM 00102 / Lb 14) protein is tRNA dimethylallyltransferase.